The primary structure comprises 472 residues: Tyrosine--tRNA ligase, mitochondrial (472 aa).

Residue Tyr72 coordinates L-tyrosine. Asp76 lines the ATP pocket. Residues 77-86 (PTGDSLHVGH) carry the 'HIGH' region motif. Residues Asp116, Tyr216, Gln220, Asp223, and Gln242 each coordinate L-tyrosine. Positions 269 and 279 each coordinate ATP. Residues 276–280 (KLGKS) carry the 'KMSKS' region motif. Lys350 and Lys362 each carry N6-acetyllysine.

The protein belongs to the class-I aminoacyl-tRNA synthetase family. As to quaternary structure, homodimer.

It localises to the mitochondrion matrix. It catalyses the reaction tRNA(Tyr) + L-tyrosine + ATP = L-tyrosyl-tRNA(Tyr) + AMP + diphosphate + H(+). Functionally, catalyzes the attachment of tyrosine to tRNA(Tyr) in a two-step reaction: tyrosine is first activated by ATP to form Tyr-AMP and then transferred to the acceptor end of tRNA(Tyr). The sequence is that of Tyrosine--tRNA ligase, mitochondrial (Yars2) from Mus musculus (Mouse).